Here is a 223-residue protein sequence, read N- to C-terminus: MSWVVAIAVVFVVVLKVLEYSTSYHDLVLQSLFFKNSPISVKFETLVKERRSIQEENKSISAQDNYAKWTKNNRKLDKLDKEITELGAQLKAHNEQIKGHLKKVKLLLLTVPFLCFKLWKGKHIVYNLPHHQMFPQLVAGVWSQGWLYLAILPLQLAKSIVTGSSFAIETASFPHMGVSLGIWLWALNSVISNIEFMTMQLWAKPVSKPSKKLEIVTDEIKVD.

Residue methionine 1 is a topological domain, lumenal. The chain crosses the membrane as a helical span at residues 2-21 (SWVVAIAVVFVVVLKVLEYS). Topologically, residues 22 to 105 (TSYHDLVLQS…QIKGHLKKVK (84 aa)) are cytoplasmic. Residues 56-105 (ENKSISAQDNYAKWTKNNRKLDKLDKEITELGAQLKAHNEQIKGHLKKVK) are a coiled coil. The helical transmembrane segment at 106 to 126 (LLLLTVPFLCFKLWKGKHIVY) threads the bilayer. Residues 127–177 (NLPHHQMFPQLVAGVWSQGWLYLAILPLQLAKSIVTGSSFAIETASFPHMG) lie on the Lumenal side of the membrane. Residues 178 to 194 (VSLGIWLWALNSVISNI) form a helical membrane-spanning segment. Residues 195 to 223 (EFMTMQLWAKPVSKPSKKLEIVTDEIKVD) lie on the Cytoplasmic side of the membrane.

It belongs to the WRB/GET1 family. As to quaternary structure, component of the Golgi to ER traffic (GET) complex, which is composed of GET1, GET2 and GET3. Within the complex, GET1 and GET2 form a heterotetramer which is stabilized by phosphatidylinositol binding and which binds to the GET3 homodimer.

Its subcellular location is the endoplasmic reticulum membrane. It is found in the golgi apparatus membrane. Required for the post-translational delivery of tail-anchored (TA) proteins to the endoplasmic reticulum. Together with GET2, acts as a membrane receptor for soluble GET3, which recognizes and selectively binds the transmembrane domain of TA proteins in the cytosol. The GET complex cooperates with the HDEL receptor ERD2 to mediate the ATP-dependent retrieval of resident ER proteins that contain a C-terminal H-D-E-L retention signal from the Golgi to the ER. This is Golgi to ER traffic protein 1 from Candida glabrata (strain ATCC 2001 / BCRC 20586 / JCM 3761 / NBRC 0622 / NRRL Y-65 / CBS 138) (Yeast).